The primary structure comprises 198 residues: Small ribosomal subunit protein uS7 (198 aa).

Belongs to the universal ribosomal protein uS7 family. As to quaternary structure, part of the 30S ribosomal subunit.

Functionally, one of the primary rRNA binding proteins, it binds directly to 16S rRNA where it nucleates assembly of the head domain of the 30S subunit. Is located at the subunit interface close to the decoding center. This is Small ribosomal subunit protein uS7 from Desulfurococcus amylolyticus (strain DSM 18924 / JCM 16383 / VKM B-2413 / 1221n) (Desulfurococcus kamchatkensis).